Consider the following 510-residue polypeptide: NAD(P)H-quinone oxidoreductase subunit 2 A, chloroplastic (510 aa).

13 helical membrane-spanning segments follow: residues 24–44 (LLLF…GLIL), 57–77 (IPWL…ALLF), 99–119 (IFQF…VEYI), 124–144 (MAIT…MFLC), 149–169 (LITI…LSGY), 183–203 (YLLM…WLYG), 227–247 (PGIS…LSPA), 295–315 (WHLL…LIAI), 323–343 (MLAY…IVGD), 354–374 (YMLF…LFGL), 395–415 (ALSL…AGFF), 418–438 (LYLF…IGLL), and 484–504 (MIVC…IIAI).

It belongs to the complex I subunit 2 family. In terms of assembly, NDH is composed of at least 16 different subunits, 5 of which are encoded in the nucleus.

It is found in the plastid. Its subcellular location is the chloroplast thylakoid membrane. The enzyme catalyses a plastoquinone + NADH + (n+1) H(+)(in) = a plastoquinol + NAD(+) + n H(+)(out). It catalyses the reaction a plastoquinone + NADPH + (n+1) H(+)(in) = a plastoquinol + NADP(+) + n H(+)(out). Functionally, NDH shuttles electrons from NAD(P)H:plastoquinone, via FMN and iron-sulfur (Fe-S) centers, to quinones in the photosynthetic chain and possibly in a chloroplast respiratory chain. The immediate electron acceptor for the enzyme in this species is believed to be plastoquinone. Couples the redox reaction to proton translocation, and thus conserves the redox energy in a proton gradient. This is NAD(P)H-quinone oxidoreductase subunit 2 A, chloroplastic from Solanum tuberosum (Potato).